Consider the following 349-residue polypeptide: Aspartate carbamoyltransferase catalytic subunit (349 aa).

Carbamoyl phosphate contacts are provided by R59 and T60. L-aspartate is bound at residue K87. The carbamoyl phosphate site is built by R109, H142, and Q145. L-aspartate-binding residues include R182 and R253. The carbamoyl phosphate site is built by G294 and P295.

Belongs to the aspartate/ornithine carbamoyltransferase superfamily. ATCase family. As to quaternary structure, heterododecamer (2C3:3R2) of six catalytic PyrB chains organized as two trimers (C3), and six regulatory PyrI chains organized as three dimers (R2).

It carries out the reaction carbamoyl phosphate + L-aspartate = N-carbamoyl-L-aspartate + phosphate + H(+). Its pathway is pyrimidine metabolism; UMP biosynthesis via de novo pathway; (S)-dihydroorotate from bicarbonate: step 2/3. Catalyzes the condensation of carbamoyl phosphate and aspartate to form carbamoyl aspartate and inorganic phosphate, the committed step in the de novo pyrimidine nucleotide biosynthesis pathway. This is Aspartate carbamoyltransferase catalytic subunit from Synechococcus sp. (strain CC9902).